Consider the following 242-residue polypeptide: HTH domain-truncated transcriptional regulator QseD (242 aa).

It belongs to the LysR transcriptional regulatory family.

Functionally, represses EHEC virulence expression. Down-regulates expression of LEE (locus of enterocyte effacement) and iraD genes, and alters AE (attaching and effacing) lesion formation. May regulate transcription through interactions with another HTH DNA-binding protein. This chain is HTH domain-truncated transcriptional regulator QseD (qseD), found in Escherichia coli O157:H7.